The sequence spans 508 residues: ATP synthase subunit alpha, mitochondrial (508 aa).

171–178 lines the ATP pocket; that stretch reads GDRQTGKT.

It belongs to the ATPase alpha/beta chains family. In terms of assembly, F-type ATPases have 2 components, CF(1) - the catalytic core - and CF(0) - the membrane proton channel. CF(1) has five subunits: alpha(3), beta(3), gamma(1), delta(1), epsilon(1). CF(0) has three main subunits: a, b and c.

It is found in the mitochondrion. Its subcellular location is the mitochondrion inner membrane. Mitochondrial membrane ATP synthase (F(1)F(0) ATP synthase or Complex V) produces ATP from ADP in the presence of a proton gradient across the membrane which is generated by electron transport complexes of the respiratory chain. F-type ATPases consist of two structural domains, F(1) - containing the extramembraneous catalytic core, and F(0) - containing the membrane proton channel, linked together by a central stalk and a peripheral stalk. During catalysis, ATP synthesis in the catalytic domain of F(1) is coupled via a rotary mechanism of the central stalk subunits to proton translocation. Subunits alpha and beta form the catalytic core in F(1). Rotation of the central stalk against the surrounding alpha(3)beta(3) subunits leads to hydrolysis of ATP in three separate catalytic sites on the beta subunits. Subunit alpha does not bear the catalytic high-affinity ATP-binding sites. In Zea mays (Maize), this protein is ATP synthase subunit alpha, mitochondrial (ATPA).